The primary structure comprises 378 residues: Erythronate-4-phosphate dehydrogenase (378 aa).

2 residues coordinate substrate: serine 45 and threonine 66. NAD(+)-binding residues include aspartate 146 and threonine 175. The active site involves arginine 208. Aspartate 232 is an NAD(+) binding site. Glutamate 237 is a catalytic residue. The Proton donor role is filled by histidine 254. Glycine 257 contributes to the NAD(+) binding site. Tyrosine 258 is a substrate binding site.

This sequence belongs to the D-isomer specific 2-hydroxyacid dehydrogenase family. PdxB subfamily. Homodimer.

It is found in the cytoplasm. The catalysed reaction is 4-phospho-D-erythronate + NAD(+) = (R)-3-hydroxy-2-oxo-4-phosphooxybutanoate + NADH + H(+). It participates in cofactor biosynthesis; pyridoxine 5'-phosphate biosynthesis; pyridoxine 5'-phosphate from D-erythrose 4-phosphate: step 2/5. Functionally, catalyzes the oxidation of erythronate-4-phosphate to 3-hydroxy-2-oxo-4-phosphonooxybutanoate. The polypeptide is Erythronate-4-phosphate dehydrogenase (Citrobacter koseri (strain ATCC BAA-895 / CDC 4225-83 / SGSC4696)).